Here is a 408-residue protein sequence, read N- to C-terminus: Imidazolonepropionase (408 aa).

The Fe(3+) site is built by His73 and His75. 2 residues coordinate Zn(2+): His73 and His75. Positions 82, 145, and 178 each coordinate 4-imidazolone-5-propanoate. N-formimidoyl-L-glutamate is bound at residue Tyr145. His243 is a Fe(3+) binding site. His243 serves as a coordination point for Zn(2+). Residue Gln246 coordinates 4-imidazolone-5-propanoate. Asp318 provides a ligand contact to Fe(3+). Residue Asp318 participates in Zn(2+) binding. N-formimidoyl-L-glutamate is bound by residues Asn320 and Gly322. Position 323 (Ser323) interacts with 4-imidazolone-5-propanoate.

The protein belongs to the metallo-dependent hydrolases superfamily. HutI family. Zn(2+) is required as a cofactor. The cofactor is Fe(3+).

It localises to the cytoplasm. It carries out the reaction 4-imidazolone-5-propanoate + H2O = N-formimidoyl-L-glutamate. The protein operates within amino-acid degradation; L-histidine degradation into L-glutamate; N-formimidoyl-L-glutamate from L-histidine: step 3/3. Functionally, catalyzes the hydrolytic cleavage of the carbon-nitrogen bond in imidazolone-5-propanoate to yield N-formimidoyl-L-glutamate. It is the third step in the universal histidine degradation pathway. The sequence is that of Imidazolonepropionase from Shewanella sp. (strain W3-18-1).